A 291-amino-acid chain; its full sequence is Ribose-phosphate pyrophosphokinase (291 aa).

ATP-binding positions include 34–36 (DGE) and 93–94 (RQ). Residues H127 and D165 each contribute to the Mg(2+) site. Residue K188 is part of the active site. Residues R190, D216, and 220 to 224 (STGGT) each bind D-ribose 5-phosphate.

It belongs to the ribose-phosphate pyrophosphokinase family. Class III (archaeal) subfamily. Mg(2+) is required as a cofactor.

The protein localises to the cytoplasm. The catalysed reaction is D-ribose 5-phosphate + ATP = 5-phospho-alpha-D-ribose 1-diphosphate + AMP + H(+). Its pathway is metabolic intermediate biosynthesis; 5-phospho-alpha-D-ribose 1-diphosphate biosynthesis; 5-phospho-alpha-D-ribose 1-diphosphate from D-ribose 5-phosphate (route I): step 1/1. Its function is as follows. Involved in the biosynthesis of the central metabolite phospho-alpha-D-ribosyl-1-pyrophosphate (PRPP) via the transfer of pyrophosphoryl group from ATP to 1-hydroxyl of ribose-5-phosphate (Rib-5-P). This Sulfolobus acidocaldarius (strain ATCC 33909 / DSM 639 / JCM 8929 / NBRC 15157 / NCIMB 11770) protein is Ribose-phosphate pyrophosphokinase.